Reading from the N-terminus, the 333-residue chain is Zinc-type alcohol dehydrogenase-like protein SACOL2177 (333 aa).

It belongs to the zinc-containing alcohol dehydrogenase family. Quinone oxidoreductase subfamily.

In Staphylococcus aureus (strain COL), this protein is Zinc-type alcohol dehydrogenase-like protein SACOL2177.